A 701-amino-acid polypeptide reads, in one-letter code: Mediator of RNA polymerase II transcription subunit 25 (701 aa).

Disordered regions lie at residues 277–388 and 580–617; these read AAQK…GAQQ and AAAT…NPGA. Residues 286-306 are compositionally biased toward polar residues; sequence ANQQQKNRFGQISTPPFSQSP. Composition is skewed to low complexity over residues 314 to 367 and 593 to 604; these read PSLS…NNQQ and APPNQVQGQAQA. An LXXLL motif motif is present at residues 621 to 625; sequence LRSLL. Residues 650–689 form a disordered region; sequence APGGGAQMQPQWRQPHQGPLMVPTGPRGPVTQNPGMPSVS. Over residues 679–689 the composition is skewed to polar residues; that stretch reads VTQNPGMPSVS.

This sequence belongs to the Mediator complex subunit 25 family. As to quaternary structure, component of the Mediator complex.

The protein localises to the nucleus. In terms of biological role, component of the Mediator complex, a coactivator involved in the regulated transcription of nearly all RNA polymerase II-dependent genes. Mediator functions as a bridge to convey information from gene-specific regulatory proteins to the basal RNA polymerase II transcription machinery. Mediator is recruited to promoters by direct interactions with regulatory proteins and serves as a scaffold for the assembly of a functional preinitiation complex with RNA polymerase II and the general transcription factors. The protein is Mediator of RNA polymerase II transcription subunit 25 (med25) of Danio rerio (Zebrafish).